The sequence spans 557 residues: Vanadium-dependent bromoperoxidase (557 aa).

Position 1 is a pyrrolidone carboxylic acid (Gln1). The interval 1–22 (QTCSTSDDADDPTPPNERDDEA) is disordered. A disulfide bridge connects residues Cys77 and Cys86. Positions 341 and 349 each coordinate vanadate. His411 is an active-site residue. Ser416, Gly417, and His418 together coordinate vanadate. The active site involves His418. An intrachain disulfide couples Cys441 to Cys462. Vanadate-binding residues include Arg480 and His486. The cysteines at positions 544 and 555 are disulfide-linked.

This sequence belongs to the vanadium-dependent haloperoxidase family. In terms of assembly, homodimer; disulfide-linked. Vanadate serves as cofactor.

It carries out the reaction RH + Br(-) + H2O2 = RBr + 2 H2O.. In terms of biological role, catalyzes the halogenation of organic substrates in the presence of hydrogen peroxide. The polypeptide is Vanadium-dependent bromoperoxidase (Ascophyllum nodosum (Knotted wrack)).